The following is a 201-amino-acid chain: Natural cytotoxicity triggering receptor 3 (201 aa).

The signal sequence occupies residues 1–18 (MAWMLLLILIMVHPGSCA). The Ig-like domain maps to 19 to 126 (LWVSQPPEIR…VGTGNGTRLV (108 aa)). The Extracellular segment spans residues 19-135 (LWVSQPPEIR…VVEKEHPQLG (117 aa)). A disulfide bridge connects residues Cys39 and Cys108. 2 N-linked (GlcNAc...) asparagine glycosylation sites follow: Asn42 and Asn121. The helical transmembrane segment at 136-156 (AGTVLLLRAGFYAVSFLSVAV) threads the bilayer. The Cytoplasmic portion of the chain corresponds to 157 to 201 (GSTVYYQGKCLTWKGPRRQLPAVVPAPLPPPCGSSAHLLPPVPGG).

Belongs to the natural cytotoxicity receptor (NCR) family. In terms of assembly, homodimer in the unliganted form. Interacts with CD3Z. Interacts with and is activated by binding to NCR3LG1. Interacts with and is activated by binding to BAG6. Interacts with and is inhibited by binding to LGALS3. In terms of tissue distribution, selectively expressed by all resting and activated NK cells and weakly expressed in spleen.

The protein localises to the cell membrane. In terms of biological role, cell membrane receptor of natural killer/NK cells that is activated by binding of extracellular ligands including BAG6 and NCR3LG1. Stimulates NK cells cytotoxicity toward neighboring cells producing these ligands. It controls, for instance, NK cells cytotoxicity against tumor cells. Engagement of NCR3 by BAG6 also promotes myeloid dendritic cells (DC) maturation, both through killing DCs that did not acquire a mature phenotype, and inducing the release by NK cells of TNFA and IFNG which promote DC maturation. In Homo sapiens (Human), this protein is Natural cytotoxicity triggering receptor 3.